The chain runs to 345 residues: RNA polymerase II holoenzyme cyclin-like subunit (345 aa).

Positions 23–147 (ESRRKLLLLE…KLAEFEFYLI (125 aa)) constitute a Cyclin N-terminal domain.

The protein belongs to the cyclin family. Cyclin C subfamily. As to quaternary structure, component of the SRB8-11 complex, a regulatory module of the Mediator complex.

The protein resides in the nucleus. Its function is as follows. Component of the SRB8-11 complex. The SRB8-11 complex is a regulatory module of the Mediator complex which is itself involved in regulation of basal and activated RNA polymerase II-dependent transcription. The SRB8-11 complex may be involved in the transcriptional repression of a subset of genes regulated by Mediator. It may inhibit the association of the Mediator complex with RNA polymerase II to form the holoenzyme complex. The SRB8-11 complex phosphorylates the C-terminal domain (CTD) of the largest subunit of RNA polymerase II. This Debaryomyces hansenii (strain ATCC 36239 / CBS 767 / BCRC 21394 / JCM 1990 / NBRC 0083 / IGC 2968) (Yeast) protein is RNA polymerase II holoenzyme cyclin-like subunit (SSN8).